Reading from the N-terminus, the 84-residue chain is ATP synthase subunit c (84 aa).

The next 2 helical transmembrane spans lie at 10 to 30 (IAVGIIVGLASLGTAIGFALL) and 53 to 73 (FIIAGLLDAVPMIGIVIALLF).

Belongs to the ATPase C chain family. In terms of assembly, F-type ATPases have 2 components, F(1) - the catalytic core - and F(0) - the membrane proton channel. F(1) has five subunits: alpha(3), beta(3), gamma(1), delta(1), epsilon(1). F(0) has three main subunits: a(1), b(2) and c(10-14). The alpha and beta chains form an alternating ring which encloses part of the gamma chain. F(1) is attached to F(0) by a central stalk formed by the gamma and epsilon chains, while a peripheral stalk is formed by the delta and b chains.

It is found in the cell inner membrane. Its function is as follows. F(1)F(0) ATP synthase produces ATP from ADP in the presence of a proton or sodium gradient. F-type ATPases consist of two structural domains, F(1) containing the extramembraneous catalytic core and F(0) containing the membrane proton channel, linked together by a central stalk and a peripheral stalk. During catalysis, ATP synthesis in the catalytic domain of F(1) is coupled via a rotary mechanism of the central stalk subunits to proton translocation. Key component of the F(0) channel; it plays a direct role in translocation across the membrane. A homomeric c-ring of between 10-14 subunits forms the central stalk rotor element with the F(1) delta and epsilon subunits. In Vibrio alginolyticus, this protein is ATP synthase subunit c.